The following is a 184-amino-acid chain: Trichothecene 15-O-acetyltransferase SAT16 (184 aa).

Residue histidine 154 participates in substrate binding.

It belongs to the trichothecene O-acetyltransferase family.

Its pathway is mycotoxin biosynthesis. In terms of biological role, trichothecene 15-O-acetyltransferase; part of the satratoxin SC2 cluster involved in the biosynthesis of satratoxins, trichothecene mycotoxins that are associated with human food poisonings. Satratoxins are suggested to be made by products of multiple gene clusters (SC1, SC2 and SC3) that encode 21 proteins in all, including polyketide synthases, acetyltransferases, and other enzymes expected to modify the trichothecene skeleton. SC1 encodes 10 proteins, SAT1 to SAT10. The largest are SAT8, which encodes a putative polyketide synthase (PKS) with a conventional non-reducing architecture, and SAT10, a putative protein containing four ankyrin repeats and thus may be involved in protein scaffolding. The putative short-chain reductase SAT3 may assist the PKS in some capacity. SAT6 contains a secretory lipase domain and acts probably as a trichothecene esterase. SAT5 encodes a putative acetyltransferase, and so, with SAT6, may affect endogenous protection from toxicity. The probable transcription factor SAT9 may regulate the expression of the SC1 cluster. SC2 encodes proteins SAT11 to SAT16, the largest of which encodes the putative reducing PKS SAT13. SAT11 is a cytochrome P450 monooxygenase, while SAT14 and SAT16 are probable acetyltransferases. The SC2 cluster may be regulated by the transcription factor SAT15. SC3 is a small cluster that encodes 5 proteins, SAT17 to SAT21. SAT21 is a putative MFS-type transporter which may have a role in exporting secondary metabolites. The four other proteins putatively encoded in SC3 include the taurine hydroxylase-like protein SAT17, the O-methyltransferase SAT18, the acetyltransferase SAT19, and the Cys6-type zinc finger SAT20, the latter being probably involved in regulation of SC3 expression. The protein is Trichothecene 15-O-acetyltransferase SAT16 of Stachybotrys chartarum (strain CBS 109288 / IBT 7711) (Toxic black mold).